Reading from the N-terminus, the 345-residue chain is tRNA N6-adenosine threonylcarbamoyltransferase (345 aa).

Fe cation-binding residues include His111 and His115. Residues 134–138, Asp167, Gly180, Asp184, and Asn278 each bind substrate; that span reads LVSGG. Position 306 (Asp306) interacts with Fe cation.

The protein belongs to the KAE1 / TsaD family. The cofactor is Fe(2+).

Its subcellular location is the cytoplasm. The enzyme catalyses L-threonylcarbamoyladenylate + adenosine(37) in tRNA = N(6)-L-threonylcarbamoyladenosine(37) in tRNA + AMP + H(+). Its function is as follows. Required for the formation of a threonylcarbamoyl group on adenosine at position 37 (t(6)A37) in tRNAs that read codons beginning with adenine. Is involved in the transfer of the threonylcarbamoyl moiety of threonylcarbamoyl-AMP (TC-AMP) to the N6 group of A37, together with TsaE and TsaB. TsaD likely plays a direct catalytic role in this reaction. This is tRNA N6-adenosine threonylcarbamoyltransferase from Cyanothece sp. (strain PCC 7425 / ATCC 29141).